Here is a 77-residue protein sequence, read N- to C-terminus: uncharacterized protein (77 aa).

This is an uncharacterized protein from Treponema pallidum (strain Nichols).